A 104-amino-acid chain; its full sequence is N(4)-acetylcytidine amidohydrolase (104 aa).

Positions 6–94 (ITFFQRFQND…IAEIYPNQTQ (89 aa)) constitute an ASCH domain. The Proton acceptor role is filled by K21. The active-site Nucleophile is the T24. E74 acts as the Proton donor in catalysis.

The protein belongs to the N(4)-acetylcytidine amidohydrolase family.

The catalysed reaction is N(4)-acetylcytidine + H2O = cytidine + acetate + H(+). The enzyme catalyses N(4)-acetyl-2'-deoxycytidine + H2O = 2'-deoxycytidine + acetate + H(+). It catalyses the reaction N(4)-acetylcytosine + H2O = cytosine + acetate + H(+). In terms of biological role, catalyzes the hydrolysis of N(4)-acetylcytidine (ac4C). This chain is N(4)-acetylcytidine amidohydrolase (yqfB), found in Salmonella dublin (strain CT_02021853).